We begin with the raw amino-acid sequence, 166 residues long: Endoribonuclease YbeY (166 aa).

Residues histidine 132, histidine 136, and histidine 142 each coordinate Zn(2+).

This sequence belongs to the endoribonuclease YbeY family. Zn(2+) is required as a cofactor.

It localises to the cytoplasm. In terms of biological role, single strand-specific metallo-endoribonuclease involved in late-stage 70S ribosome quality control and in maturation of the 3' terminus of the 16S rRNA. The chain is Endoribonuclease YbeY from Clostridium botulinum (strain 657 / Type Ba4).